A 466-amino-acid chain; its full sequence is MKSIDYVNPVKNQVPKVGFVSLGCPKALVDSERILTQLRVEGYDIVPSYDAADVVVVNTCGFIDSAVTESLDAIGEAMNANGKVIVTGCLGKRPEQIREAYPQVLAVSGPQDYQSVMEAVHAALPPRHDPFVDLVPDYGIKLTPRHYAYLKISEGCNHRCSFCIIPSMRGDLVSRPVDEVLCEAERLVRGGVKELLVVSQDTSAYGVDLKYAERPWRDRMYQTRMKALCEGLSELGVWTRLHYVYPYPHVDDVLPLMAEGKLLPYLDIPFQHASPRILKLMKRPGAVEKTLQRVQRWKAMCPEITVRSTFIVGFPGETDAEFESLLDFLDQAQLDRVGAFAYSPVHGASANALPDPVPEEVKQERLARFMAKQAEISALRLEAKIGSVQQCLVDLIEDDIAVARSRADAPEIDGLVHIQNGGELGLKVGDLVDVEITDSDEHDLFGDALPANVVPQQGRALNLQMV.

In terms of domain architecture, MTTase N-terminal spans 15 to 125 (PKVGFVSLGC…VMEAVHAALP (111 aa)). Positions 24, 60, 89, 156, 160, and 163 each coordinate [4Fe-4S] cluster. A Radical SAM core domain is found at 142–380 (LTPRHYAYLK…AKQAEISALR (239 aa)). Positions 382-450 (EAKIGSVQQC…EHDLFGDALP (69 aa)) constitute a TRAM domain.

The protein belongs to the methylthiotransferase family. RimO subfamily. The cofactor is [4Fe-4S] cluster.

Its subcellular location is the cytoplasm. It carries out the reaction L-aspartate(89)-[ribosomal protein uS12]-hydrogen + (sulfur carrier)-SH + AH2 + 2 S-adenosyl-L-methionine = 3-methylsulfanyl-L-aspartate(89)-[ribosomal protein uS12]-hydrogen + (sulfur carrier)-H + 5'-deoxyadenosine + L-methionine + A + S-adenosyl-L-homocysteine + 2 H(+). Catalyzes the methylthiolation of an aspartic acid residue of ribosomal protein uS12. This is Ribosomal protein uS12 methylthiotransferase RimO from Xanthomonas oryzae pv. oryzae (strain MAFF 311018).